The following is a 268-amino-acid chain: ClpXP adapter protein SpxH (268 aa).

This sequence belongs to the SpxH family. As to quaternary structure, interacts with Spx.

The protein resides in the cytoplasm. In terms of biological role, adapter protein required for efficient degradation of Spx by ClpXP under non-stress conditions. Interaction with Spx stabilizes Spx and exposes the C-terminus of Spx for recognition and proteolysis by ClpXP. The polypeptide is ClpXP adapter protein SpxH (Staphylococcus aureus (strain MRSA252)).